The chain runs to 569 residues: MKKISRKEYVSMYGPTTGDKVRLGDTDLIAEVEHDYTIYGEELKFGGGKTLREGMSQSNNPSKEELDLIITNALIVDYTGIYKADIGIKDGKIAGIGKGGNKDMQDGVKNNLSVGPATEALAGEGLIVTAGGIDTHIHFISPQQIPTAFASGVTTMIGGGTGPADGTNATTITPGRRNLKWMLRAAEEYSMNLGFLAKGNTSNDASLADQIEAGAIGFKIHEDWGTTPSAINHALDVADKYDVQVAIHTDTLNEAGCVEDTMAAIAGRTMHTFHTEGAGGGHAPDIIKVAGEHNILPASTNPTIPFTVNTEAEHMDMLMVCHHLDKSIKEDVQFADSRIRPQTIAAEDTLHDMGIFSITSSDSQAMGRVGEVITRTWQTADKNKKEFGRLKEEKGDNDNFRIKRYLSKYTINPAIAHGISEYVGSVEVGKVADLVLWSPAFFGVKPNMIIKGGFIALSQMGDANASIPTPQPVYYREMFAHHGKAKYDANITFVSQAAYDKGIKEELGLERQVLPVKNCRNITKKDMQFNDTTAHIEVNPETYHVFVDGKEVTSKPANKVSLAQLFSIF.

The Urease domain maps to 131 to 569 (GGIDTHIHFI…VSLAQLFSIF (439 aa)). Residues His-136, His-138, and Lys-219 each coordinate Ni(2+). Lys-219 carries the post-translational modification N6-carboxylysine. A substrate-binding site is contributed by His-221. Residues His-248 and His-274 each coordinate Ni(2+). Residue His-322 is the Proton donor of the active site. Position 362 (Asp-362) interacts with Ni(2+).

The protein belongs to the metallo-dependent hydrolases superfamily. Urease alpha subunit family. As to quaternary structure, heterohexamer of 3 UreA (alpha) and 3 UreB (beta) subunits. It depends on Ni cation as a cofactor. In terms of processing, carboxylation allows a single lysine to coordinate two nickel ions.

The protein resides in the cytoplasm. The catalysed reaction is urea + 2 H2O + H(+) = hydrogencarbonate + 2 NH4(+). It functions in the pathway nitrogen metabolism; urea degradation; CO(2) and NH(3) from urea (urease route): step 1/1. This chain is Urease subunit beta, found in Helicobacter pylori (strain P12).